The primary structure comprises 37 residues: Mastoparan-VT (37 aa).

Residues 1–22 constitute a propeptide that is removed on maturation; it reads EALADPIADPVAGPNPEADPEA. 4 AXPX repeats span residues 4–7, 8–11, 12–15, and 18–21; these read ADPI, ADPV, AGPN, and ADPE. Leucine amide is present on Leu36.

Belongs to the MCD family. Mastoparan subfamily. As to expression, expressed by the venom gland.

It is found in the secreted. It localises to the target cell membrane. Its function is as follows. Antimicrobial peptide with potent activity against both Gram-positive (S.aureus MIC=50 ug/ml, and B.subtilis MIC=25 ug/ml) and Gram-negative bacteria (P.aeruginosa MIC=25 ug/ml, E.coli MIC=3-50 ug/ml, K.pneumoniae MIC=25 ug/ml). Exhibits little hemolytic activity on human erythrocytes. This Vespa tropica (Greater banded hornet) protein is Mastoparan-VT.